Here is a 424-residue protein sequence, read N- to C-terminus: Cyclin-dependent kinase D-1 (424 aa).

The 281-residue stretch at 19-299 (YLKREVLGEG…AQQALEHRYF (281 aa)) folds into the Protein kinase domain. Residues 25 to 33 (LGEGTYGVV) and lysine 48 contribute to the ATP site. Threonine 29 is subject to Phosphothreonine. Tyrosine 30 bears the Phosphotyrosine mark. Aspartate 141 (proton acceptor) is an active-site residue. The residue at position 168 (serine 168) is a Phosphoserine. Threonine 174 is subject to Phosphothreonine. Disordered stretches follow at residues 303 to 337 (PAPT…PVVL) and 359 to 424 (ADRT…GYTE). Residues 359-374 (ADRTEEHPSGARHMDD) show a composition bias toward basic and acidic residues.

The protein belongs to the protein kinase superfamily. CMGC Ser/Thr protein kinase family. CDC2/CDKX subfamily.

Its subcellular location is the nucleus. The enzyme catalyses L-seryl-[protein] + ATP = O-phospho-L-seryl-[protein] + ADP + H(+). It catalyses the reaction L-threonyl-[protein] + ATP = O-phospho-L-threonyl-[protein] + ADP + H(+). The catalysed reaction is [DNA-directed RNA polymerase] + ATP = phospho-[DNA-directed RNA polymerase] + ADP + H(+). This chain is Cyclin-dependent kinase D-1 (CDKD-1), found in Oryza sativa subsp. indica (Rice).